We begin with the raw amino-acid sequence, 203 residues long: Large ribosomal subunit protein bL25 (203 aa).

The protein belongs to the bacterial ribosomal protein bL25 family. CTC subfamily. In terms of assembly, part of the 50S ribosomal subunit; part of the 5S rRNA/L5/L18/L25 subcomplex. Contacts the 5S rRNA. Binds to the 5S rRNA independently of L5 and L18.

Its function is as follows. This is one of the proteins that binds to the 5S RNA in the ribosome where it forms part of the central protuberance. In Paraburkholderia phymatum (strain DSM 17167 / CIP 108236 / LMG 21445 / STM815) (Burkholderia phymatum), this protein is Large ribosomal subunit protein bL25.